A 292-amino-acid polypeptide reads, in one-letter code: 2-(5''-triphosphoribosyl)-3'-dephosphocoenzyme-A synthase (292 aa).

The protein belongs to the CitG/MdcB family.

The enzyme catalyses 3'-dephospho-CoA + ATP = 2'-(5''-triphospho-alpha-D-ribosyl)-3'-dephospho-CoA + adenine. Its function is as follows. Catalyzes the formation of 2-(5''-triphosphoribosyl)-3'-dephosphocoenzyme-A, the precursor of the prosthetic group of the holo-acyl carrier protein (gamma chain) of citrate lyase, from ATP and dephospho-CoA. In Escherichia coli O6:K15:H31 (strain 536 / UPEC), this protein is 2-(5''-triphosphoribosyl)-3'-dephosphocoenzyme-A synthase.